Here is a 195-residue protein sequence, read N- to C-terminus: Imidazoleglycerol-phosphate dehydratase (195 aa).

It belongs to the imidazoleglycerol-phosphate dehydratase family.

It localises to the cytoplasm. It carries out the reaction D-erythro-1-(imidazol-4-yl)glycerol 3-phosphate = 3-(imidazol-4-yl)-2-oxopropyl phosphate + H2O. It functions in the pathway amino-acid biosynthesis; L-histidine biosynthesis; L-histidine from 5-phospho-alpha-D-ribose 1-diphosphate: step 6/9. The protein is Imidazoleglycerol-phosphate dehydratase of Geobacillus sp. (strain WCH70).